Consider the following 456-residue polypeptide: F-box/FBD/LRR-repeat protein At1g13780 (456 aa).

The 47-residue stretch at 9 to 55 (FDRISELPESLISQILLHLPTKASVKTSVLSTRWKNLWLNVPGLDLN) folds into the F-box domain. LRR repeat units follow at residues 197–220 (LEEL…SLKR), 243–266 (APGL…NLTS), 302–325 (ISSV…SKVG), and 355–379 (FPNL…ELVN). Residues 372–424 (MEKFELVNVPRCFVSTLEHVEIKGLFDWGEQDMKIASYFLENSAVLKKLILSF) form the FBD domain.

This Arabidopsis thaliana (Mouse-ear cress) protein is F-box/FBD/LRR-repeat protein At1g13780.